The chain runs to 358 residues: WD repeat-containing protein 53 (358 aa).

5 WD repeats span residues 8 to 47 (GHSSSILCLNANKDGLVASGGEGGDLVAWGEDGTPLGHMQ), 92 to 131 (VNEEEINCLSLNETESLLASADDSGAIKILDLEKKKVTRS), 134 to 174 (RHSN…PVWI), 195 to 234 (LNPALAHSVSVASCGNIFSCGAEDGKVRIFRVMGVKCERE), and 239 to 278 (GHTLGVSQVCFLPESSLLLTGGNDGRIRLWDVSGKMEKLQ). The interval 288-309 (KKAKRAACPTQGGNSRAPGAED) is disordered.

It belongs to the WD repeat WDR53 family.

The chain is WD repeat-containing protein 53 (Wdr53) from Mus musculus (Mouse).